We begin with the raw amino-acid sequence, 562 residues long: MTTTTTVKSDIEIAQEASMKKIQEIAADLNILEDELEPYGHYKGKLSLDIFKRLQDEKDGKVVLVTAINPTPAGEGKSTVTVGLGQAFNKIGKKTVIALREPSLGPTMGLKGGAAGGGFSQVVPMEDINLHFTGDIHAITTANNALAAFIDNHIQQGNTLGIDTRKIVWKRCVDLNDRALRNVVIGLGGPVQGVPREDGFDITVASEIMAVFCLATDIQDLKARLSRIVVAYNFANQPVTVKDLGVEGALTLLLKDALKPNLVQTLENTPAIIHGGPFANIAHGCNSVIATTMAAKLGDYVITEAGFGADLGAEKFLDIKARAAGIKPEAVVIVATIRALKMHGGVAKDQLKEENVDALAKGMENLQKHVETIQSFGVPFVIAINKFITDTDAEVTYLQEWCNERGYAVSLTEVWEKGGQGGVDLAEKVLKEIEKGENNYAPLYELELPLEEKIRTIAQKVYGAKDIEFAPKARKQLAQYEGEGWSNLPVCMAKTQYSLSDDVTKLGRPSDFIVTIRELKPSIGAGFIVALTGTMLTMPGLPKQPAALQMDVNEDGKAVGLF.

71-78 (TPAGEGKS) is an ATP binding site.

Belongs to the formate--tetrahydrofolate ligase family.

It catalyses the reaction (6S)-5,6,7,8-tetrahydrofolate + formate + ATP = (6R)-10-formyltetrahydrofolate + ADP + phosphate. It functions in the pathway one-carbon metabolism; tetrahydrofolate interconversion. The polypeptide is Formate--tetrahydrofolate ligase (Bacillus cereus (strain ATCC 14579 / DSM 31 / CCUG 7414 / JCM 2152 / NBRC 15305 / NCIMB 9373 / NCTC 2599 / NRRL B-3711)).